Here is a 151-residue protein sequence, read N- to C-terminus: Ribosome maturation factor RimP (151 aa).

Belongs to the RimP family.

It is found in the cytoplasm. Required for maturation of 30S ribosomal subunits. In Endomicrobium trichonymphae, this protein is Ribosome maturation factor RimP.